The chain runs to 84 residues: Conotoxin Am6.1 (84 aa).

The N-terminal stretch at 1–19 (MEKLTILLLVAAVLMSTHA) is a signal peptide. The propeptide occupies 20-47 (MFQGGGEKSRKAINFSETRKLARNKQKR). Disulfide bonds link C48–C62, C55–C66, and C61–C71. W51 carries the post-translational modification 6'-bromotryptophan; in Am6.1b. A 4-carboxyglutamate; partial; in Am6.1b and Am6.1c mark is found at E60 and E64. Residues 78–84 (RTTSHPI) constitute a propeptide that is removed on maturation.

This sequence belongs to the conotoxin O2 family. Post-translationally, three forms of this peptides have been described. The unmodified Am6.1a (Am3286) is not detected in the venom; Am6.1b (Am3408) is only Trp brominated, while Am6.1c (Am3452) is both Trp brominated and Glu gamma-carboxyglutamated. Both Am6.1b and Am6.1c are detected in the venom. As to expression, expressed by the venom duct.

It localises to the secreted. In terms of biological role, gamma-conotoxins may act on voltage-gated non-specific cation pacemaker channels (HCN). The polypeptide is Conotoxin Am6.1 (Conus amadis (Amadis cone)).